Reading from the N-terminus, the 649-residue chain is Protein PSK SIMULATOR 3 (649 aa).

Glycine 2 is lipidated: N-myristoyl glycine. The disordered stretch occupies residues serine 18 to isoleucine 43.

The protein resides in the nucleus. Functionally, promotes plant growth, especially at the vegetative stage, probably via the regulation of phytosulfokine (PSK) signaling; PSK are peptide phytohormones acting as growth factors. Together with PSI2 and PSI3, required during vegetative growth and reproduction. May also have a function in carbohydrate metabolism. This chain is Protein PSK SIMULATOR 3, found in Arabidopsis thaliana (Mouse-ear cress).